The primary structure comprises 346 residues: c-di-GMP synthase (346 aa).

The protein belongs to the CD-NTase family.

The enzyme catalyses 2 GTP = 3',3'-c-di-GMP + 2 diphosphate. Functionally, cyclic nucleotide synthase (second messenger synthase) of a CBASS antivirus system. CBASS (cyclic oligonucleotide-based antiphage signaling system) provides immunity against bacteriophage. The CD-NTase protein synthesizes cyclic nucleotides in response to infection; these serve as specific second messenger signals. The signals activate a diverse range of effectors, leading to bacterial cell death and thus abortive phage infection. A type I-D(GG) CBASS system. Its function is as follows. Cyclic dinucleotide synthase that catalyzes the synthesis of c-di-GMP, has no activity with other NTP substrates. This chain is c-di-GMP synthase, found in Lachnospiraceae bacterium (strain RUG226).